The following is a 476-amino-acid chain: Zinc metalloproteinase/disintegrin (476 aa).

An N-terminal signal peptide occupies residues 1 to 20 (MIQVLLVIICLADFPYQGTS). A propeptide spanning residues 21-184 (IILESGNVND…KSDEPIKASQ (164 aa)) is cleaved from the precursor. Position 185 is a pyrrolidone carboxylic acid (Gln-185). The 197-residue stretch at 191–387 (RYIELVVVAD…RNPQCILNEP (197 aa)) folds into the Peptidase M12B domain. Ca(2+) is bound by residues Glu-194 and Asp-278. Intrachain disulfides connect Cys-302-Cys-382, Cys-342-Cys-366, and Cys-344-Cys-349. His-327 is a Zn(2+) binding site. The active site involves Glu-328. Residues His-331 and His-337 each coordinate Zn(2+). Ca(2+) contacts are provided by Cys-382 and Asn-385. The propeptide occupies 388–403 (LRTDTVSTPVSGNELL). In terms of domain architecture, Disintegrin spans 395–476 (TPVSGNELLE…AGCPRNGFYG (82 aa)). Disulfide bonds link Cys-409–Cys-424, Cys-411–Cys-419, Cys-418–Cys-441, Cys-432–Cys-438, Cys-437–Cys-462, and Cys-450–Cys-469. A Cell attachment site motif is present at residues 454–456 (KGD).

Belongs to the venom metalloproteinase (M12B) family. P-II subfamily. P-IId sub-subfamily. As to quaternary structure, homodimer; disulfide-linked (disintegrin). The cofactor is Zn(2+). In terms of tissue distribution, expressed by the venom gland.

It localises to the secreted. The metalloproteinase is inhibited by EDTA, o-phenanthroline, and cysteine. Glutathione does not inhibit the enzymatic activity. Shows weak degradation of alpha-fibrinogen, but has no activity on beta- and gamma-chains. Digests luteinizing hormone-releasing hormone (LH-RH) and oxidized insulin at X-Leu, X-Phe, and X-Val bonds as well as X-His bond. Does not show fibrinogen-clotting activity. Does not show hemorrhagic activity. In terms of biological role, inhibits ADP-induced platelet aggregation. The protein is Zinc metalloproteinase/disintegrin of Gloydius brevicauda (Korean slamosa snake).